The primary structure comprises 935 residues: Isoleucine--tRNA ligase (935 aa).

Positions 58–68 match the 'HIGH' region motif; sequence PYANGSIHVGH. E558 serves as a coordination point for L-isoleucyl-5'-AMP. The 'KMSKS' region motif lies at 599-603; it reads KMSKS. ATP is bound at residue K602. Residues C897, C900, C917, and C920 each contribute to the Zn(2+) site.

Belongs to the class-I aminoacyl-tRNA synthetase family. IleS type 1 subfamily. As to quaternary structure, monomer. It depends on Zn(2+) as a cofactor.

It localises to the cytoplasm. The enzyme catalyses tRNA(Ile) + L-isoleucine + ATP = L-isoleucyl-tRNA(Ile) + AMP + diphosphate. Its function is as follows. Catalyzes the attachment of isoleucine to tRNA(Ile). As IleRS can inadvertently accommodate and process structurally similar amino acids such as valine, to avoid such errors it has two additional distinct tRNA(Ile)-dependent editing activities. One activity is designated as 'pretransfer' editing and involves the hydrolysis of activated Val-AMP. The other activity is designated 'posttransfer' editing and involves deacylation of mischarged Val-tRNA(Ile). This chain is Isoleucine--tRNA ligase, found in Francisella philomiragia subsp. philomiragia (strain ATCC 25017 / CCUG 19701 / FSC 153 / O#319-036).